Reading from the N-terminus, the 142-residue chain is Protein spalt-accessory (142 aa).

Positions 1-16 (MKLLIALFVLVNAVIA) are cleaved as a signal peptide. A compositionally biased stretch (gly residues) spans 65 to 77 (GQGGVSPGQGGFA). The interval 65–142 (GQGGVSPGQG…HHEHHGHHRH (78 aa)) is disordered. The segment covering 112-124 (NHHEYPEHHGDHH) has biased composition (basic and acidic residues). The span at 125 to 142 (REHHEHHGHHEHHGHHRH) shows a compositional bias: basic residues.

It is found in the secreted. Functionally, likely to be involved in the establishment of the head. In Drosophila orena (Fruit fly), this protein is Protein spalt-accessory (sala).